We begin with the raw amino-acid sequence, 122 residues long: Glycine cleavage system H protein (122 aa).

Residues 19-101 form the Lipoyl-binding domain; sequence VATVGITDYA…QGKAWFFKIK (83 aa). The residue at position 60 (K60) is an N6-lipoyllysine.

The protein belongs to the GcvH family. In terms of assembly, the glycine cleavage system is composed of four proteins: P, T, L and H. (R)-lipoate serves as cofactor.

Functionally, the glycine cleavage system catalyzes the degradation of glycine. The H protein shuttles the methylamine group of glycine from the P protein to the T protein. The polypeptide is Glycine cleavage system H protein (Bradyrhizobium diazoefficiens (strain JCM 10833 / BCRC 13528 / IAM 13628 / NBRC 14792 / USDA 110)).